Reading from the N-terminus, the 685-residue chain is MARLRVYELAKQLDMDTKELLHELEELGIEVKSHMSFIDEETVNILLDIYKQTLDEEEDISLAKTREPSKEKTEAKKPPVHITEADLKLDKFAEKIKIPQNRIIQDFFMKGEILKPGQTISISLAKKIAKMYDVRLTFEEDETAVKEQPKLENPLDELKRQFEEIYQNNKDKLVNRPPVVTVMGHVDHGKTTLLDYIRKTRVAEKEEGGITQSVGAYQVIVNGKKITFIDTPGHEVFTEMRARGAQATDIVVLVVAADDGVMPQTIEAYNHAKSANVPIIVAINKIDKANANVDMTKQELVTKLNLIPEDWGGDTIVVPISARNGINVDTLLEMILLVAEMQDIRCIPDSPVRAVTIETRLDKGYGPVANAIVKDGVLKVGDYVVAGKVFGKVKALIDDKGKRLKEAEPSTPVMIVGFEELPDPHSIIYVVDSKEKALEIVEKVREIEARELRKKRQVKLEEILKRMQETEKRELKLILKADTVGSLQALQNAIAKLRTNEIDIDIVHSAVGAINSSDIMLASASEAIILGFRVKADNQASKLAESEGVQIKTYTIIYKLLEDLKAALEGMLEPEEVEEKTGYGEIKKAFKIHKYGNIAGVQMYDGYVDKSGFVRIYRNGALVFEGKIESLKHYQQDVNKVSAPQECGIKFQNFDDIKEGDELEFYIIKKIPRKLTIIEEEKQQI.

Residues Ile60–Pro79 form a disordered region. Residues Lys64–Pro79 are compositionally biased toward basic and acidic residues. The region spanning Asn175–Val352 is the tr-type G domain. The interval Gly184–Thr191 is G1. Position 184 to 191 (Gly184 to Thr191) interacts with GTP. The tract at residues Gly209 to Ser213 is G2. The segment at Asp230–Gly233 is G3. GTP-binding positions include Asp230 to His234 and Asn284 to Asp287. Residues Asn284–Asp287 are G4. The tract at residues Ser321–Arg323 is G5.

The protein belongs to the TRAFAC class translation factor GTPase superfamily. Classic translation factor GTPase family. IF-2 subfamily.

The protein localises to the cytoplasm. Its function is as follows. One of the essential components for the initiation of protein synthesis. Protects formylmethionyl-tRNA from spontaneous hydrolysis and promotes its binding to the 30S ribosomal subunits. Also involved in the hydrolysis of GTP during the formation of the 70S ribosomal complex. This chain is Translation initiation factor IF-2, found in Fervidobacterium nodosum (strain ATCC 35602 / DSM 5306 / Rt17-B1).